The chain runs to 347 residues: Holliday junction branch migration complex subunit RuvB (347 aa).

The large ATPase domain (RuvB-L) stretch occupies residues 1–180 (MTSRVVSPEQ…FGIPCRMNFY (180 aa)). Residues L19, R20, G61, K64, T65, T66, 127-129 (EDF), R170, Y180, and R217 contribute to the ATP site. A Mg(2+)-binding site is contributed by T65. A small ATPAse domain (RuvB-S) region spans residues 181–251 (EPAELEAIVS…VADAALNRLE (71 aa)). The interval 254 to 347 (RIGLDAMDRR…LLTRMDEEGE (94 aa)) is head domain (RuvB-H). The DNA site is built by R290, R309, and R314.

This sequence belongs to the RuvB family. In terms of assembly, homohexamer. Forms an RuvA(8)-RuvB(12)-Holliday junction (HJ) complex. HJ DNA is sandwiched between 2 RuvA tetramers; dsDNA enters through RuvA and exits via RuvB. An RuvB hexamer assembles on each DNA strand where it exits the tetramer. Each RuvB hexamer is contacted by two RuvA subunits (via domain III) on 2 adjacent RuvB subunits; this complex drives branch migration. In the full resolvosome a probable DNA-RuvA(4)-RuvB(12)-RuvC(2) complex forms which resolves the HJ.

Its subcellular location is the cytoplasm. The catalysed reaction is ATP + H2O = ADP + phosphate + H(+). In terms of biological role, the RuvA-RuvB-RuvC complex processes Holliday junction (HJ) DNA during genetic recombination and DNA repair, while the RuvA-RuvB complex plays an important role in the rescue of blocked DNA replication forks via replication fork reversal (RFR). RuvA specifically binds to HJ cruciform DNA, conferring on it an open structure. The RuvB hexamer acts as an ATP-dependent pump, pulling dsDNA into and through the RuvAB complex. RuvB forms 2 homohexamers on either side of HJ DNA bound by 1 or 2 RuvA tetramers; 4 subunits per hexamer contact DNA at a time. Coordinated motions by a converter formed by DNA-disengaged RuvB subunits stimulates ATP hydrolysis and nucleotide exchange. Immobilization of the converter enables RuvB to convert the ATP-contained energy into a lever motion, pulling 2 nucleotides of DNA out of the RuvA tetramer per ATP hydrolyzed, thus driving DNA branch migration. The RuvB motors rotate together with the DNA substrate, which together with the progressing nucleotide cycle form the mechanistic basis for DNA recombination by continuous HJ branch migration. Branch migration allows RuvC to scan DNA until it finds its consensus sequence, where it cleaves and resolves cruciform DNA. In Paramagnetospirillum magneticum (strain ATCC 700264 / AMB-1) (Magnetospirillum magneticum), this protein is Holliday junction branch migration complex subunit RuvB.